Consider the following 289-residue polypeptide: 4-hydroxy-tetrahydrodipicolinate synthase (289 aa).

T46 contacts pyruvate. Y134 (proton donor/acceptor) is an active-site residue. The active-site Schiff-base intermediate with substrate is the K162. Pyruvate is bound at residue V204.

It belongs to the DapA family. In terms of assembly, homotetramer; dimer of dimers.

The protein localises to the cytoplasm. The enzyme catalyses L-aspartate 4-semialdehyde + pyruvate = (2S,4S)-4-hydroxy-2,3,4,5-tetrahydrodipicolinate + H2O + H(+). Its pathway is amino-acid biosynthesis; L-lysine biosynthesis via DAP pathway; (S)-tetrahydrodipicolinate from L-aspartate: step 3/4. Catalyzes the condensation of (S)-aspartate-beta-semialdehyde [(S)-ASA] and pyruvate to 4-hydroxy-tetrahydrodipicolinate (HTPA). This Bacillus velezensis (strain DSM 23117 / BGSC 10A6 / LMG 26770 / FZB42) (Bacillus amyloliquefaciens subsp. plantarum) protein is 4-hydroxy-tetrahydrodipicolinate synthase.